Here is a 332-residue protein sequence, read N- to C-terminus: Ribosomal RNA small subunit methyltransferase H (332 aa).

Residues 36–38 (GGY), Asp-54, Phe-81, Asp-102, and Gln-109 contribute to the S-adenosyl-L-methionine site. The segment at 297-318 (ARSAKLRGAERTEAPAHAAGDL) is disordered.

The protein belongs to the methyltransferase superfamily. RsmH family.

The protein resides in the cytoplasm. It carries out the reaction cytidine(1402) in 16S rRNA + S-adenosyl-L-methionine = N(4)-methylcytidine(1402) in 16S rRNA + S-adenosyl-L-homocysteine + H(+). In terms of biological role, specifically methylates the N4 position of cytidine in position 1402 (C1402) of 16S rRNA. In Rhodopseudomonas palustris (strain TIE-1), this protein is Ribosomal RNA small subunit methyltransferase H.